Reading from the N-terminus, the 162-residue chain is Caveolin-2 (162 aa).

Residues 1–86 are Cytoplasmic-facing; it reads MGLEKEKLEC…FELVKFIFYR (86 aa). Residues 87 to 107 constitute an intramembrane region (helical); the sequence is LLTTLLAVPAAFILGVVFGVL. At 108 to 162 the chain is on the cytoplasmic side; that stretch reads SCIHIWLVMPVTRSFLMLLPSIQVVWKSVTDMFITPLFHSMGRSLSSIQVRTSDT.

Belongs to the caveolin family. In terms of assembly, homooligomer.

It localises to the golgi apparatus membrane. Its subcellular location is the cell membrane. It is found in the membrane. The protein localises to the caveola. Functionally, may act as a scaffolding protein within caveolar membranes. Interacts directly with G-protein alpha subunits and can functionally regulate their activity. The sequence is that of Caveolin-2 (cav2) from Takifugu rubripes (Japanese pufferfish).